The sequence spans 104 residues: Large ribosomal subunit protein bL21 (104 aa).

It belongs to the bacterial ribosomal protein bL21 family. As to quaternary structure, part of the 50S ribosomal subunit. Contacts protein L20.

This protein binds to 23S rRNA in the presence of protein L20. The chain is Large ribosomal subunit protein bL21 from Helicobacter pylori (strain HPAG1).